Consider the following 346-residue polypeptide: Uricase (346 aa).

A disordered region spans residues 1–23; that stretch reads MFATPLRQPTNASGARPAVSMDG. Active-site charge relay system residues include Lys-39 and Thr-84. Positions 84, 85, 208, 225, 273, 274, and 300 each coordinate urate. Catalysis depends on His-302, which acts as the Charge relay system. The Microbody targeting signal signature appears at 344 to 346; sequence SHL.

This sequence belongs to the uricase family. In terms of tissue distribution, malpighian tubules.

The protein localises to the peroxisome. It catalyses the reaction urate + O2 + H2O = 5-hydroxyisourate + H2O2. Its pathway is purine metabolism; urate degradation; (S)-allantoin from urate: step 1/3. Repressed by 20-hydroxyecdysone. Functionally, catalyzes the oxidation of uric acid to 5-hydroxyisourate, which is further processed to form (S)-allantoin. The sequence is that of Uricase (Uro) from Drosophila pseudoobscura pseudoobscura (Fruit fly).